The following is a 651-amino-acid chain: Cytoplasmic tyrosine-protein kinase BMX (651 aa).

The PH domain occupies 4 to 111 (KSILEELLLK…WLKALQKEIR (108 aa)). Residues 113–149 (NPHLLIKYHSGFFVDGKFLCCQQSCKAAPGCTLWEAY) form a Btk-type zinc finger. 4 residues coordinate Zn(2+): His-121, Cys-132, Cys-133, and Cys-143. The 97-residue stretch at 272–368 (WFAGNISRSQ…GMITRLRHPV (97 aa)) folds into the SH2 domain. In terms of domain architecture, Protein kinase spans 393–646 (ITLLKELGNG…QLLSAIEPLR (254 aa)). ATP is bound by residues 399–407 (LGNGQFGVV) and Lys-421. The active-site Proton acceptor is the Asp-512. The residue at position 542 (Tyr-542) is a Phosphotyrosine; by SRC and autocatalysis.

It belongs to the protein kinase superfamily. Tyr protein kinase family. TEC subfamily. Interacts with BCAR1, CAV1, MYD88, PTK2/FAK1, RUFY1, RUFY2, STAT3, TIRAP and TNFRSF1B. Zn(2+) serves as cofactor. Post-translationally, phosphorylated in response to protein I/II and to LPS. Phosphorylation at Tyr-542 by SRC and by autocatalysis leads to activation and is required for STAT3 phosphorylation by BMX. In terms of tissue distribution, specifically expressed in the endocardium of the developing heart as well as in the endocardium of the left ventricle and in the endothelium of large arteries in adult mice.

The protein resides in the cytoplasm. The catalysed reaction is L-tyrosyl-[protein] + ATP = O-phospho-L-tyrosyl-[protein] + ADP + H(+). With respect to regulation, TEK and vascular endothelial growth factor receptor 1 (FLT1) stimulate BMX tyrosine kinase activity. Activated by integrins through the mediation of PTK2/FAK1. Activated by TNF through the mediation of TNFRSF1B. Non-receptor tyrosine kinase that plays central but diverse modulatory roles in various signaling processes involved in the regulation of actin reorganization, cell migration, cell proliferation and survival, cell adhesion, and apoptosis. Participates in signal transduction stimulated by growth factor receptors, cytokine receptors, G-protein coupled receptors, antigen receptors and integrins. Induces tyrosine phosphorylation of BCAR1 in response to integrin regulation. Activation of BMX by integrins is mediated by PTK2/FAK1, a key mediator of integrin signaling events leading to the regulation of actin cytoskeleton and cell motility. Plays a critical role in TNF-induced angiogenesis, and implicated in the signaling of TEK and FLT1 receptors, 2 important receptor families essential for angiogenesis. Required for the phosphorylation and activation of STAT3, a transcription factor involved in cell differentiation. Also involved in interleukin-6 (IL6) induced differentiation. Also plays a role in programming adaptive cytoprotection against extracellular stress in different cell systems, salivary epithelial cells, brain endothelial cells, and dermal fibroblasts. May be involved in regulation of endocytosis through its interaction with an endosomal protein RUFY1. May also play a role in the growth and differentiation of hematopoietic cells; as well as in signal transduction in endocardial and arterial endothelial cells. The protein is Cytoplasmic tyrosine-protein kinase BMX (Bmx) of Mus musculus (Mouse).